The sequence spans 623 residues: uncharacterized protein (623 aa).

Residues 157–166 (LNESPLRDQQ) show a composition bias toward basic and acidic residues. Residues 157 to 237 (LNESPLRDQQ…QGLPDHNNSI (81 aa)) are disordered. Positions 167–177 (ESSTPSKNSTL) are enriched in polar residues. Residues 193–210 (AFRPLPSPSRRSSQSAPA) show a composition bias toward low complexity.

This is an uncharacterized protein from Macaca fascicularis (Crab-eating macaque).